The sequence spans 159 residues: Protein RseC (159 aa).

Topologically, residues 1-72 are cytoplasmic; that stretch reads MIKEWATVVS…QKVELGIAEG (72 aa). A helical membrane pass occupies residues 73-95; that stretch reads SLLSSALLVYMSPLVGLFLIASL. At 96–98 the chain is on the periplasmic side; it reads FQL. Residues 99–121 form a helical membrane-spanning segment; it reads LFASDVAALCGAILGGIGGFLIA. The Cytoplasmic segment spans residues 122–159; it reads RGYSRKFAARAEWQPIILSVALPPGLVRFETSSEDASQ.

It belongs to the RseC family.

The protein localises to the cell inner membrane. Its function is as follows. May play a role in reduction of the SoxR iron-sulfur cluster. May work together with the RsxABCDGE complex. The polypeptide is Protein RseC (Escherichia coli (strain K12)).